Reading from the N-terminus, the 250-residue chain is Proteasome subunit alpha type-7-like (250 aa).

An O-linked (GlcNAc) serine glycan is attached at Ser-132.

This sequence belongs to the peptidase T1A family. In terms of assembly, the 26S proteasome consists of a 20S proteasome core and two 19S regulatory subunits. The 20S proteasome core is a barrel-shaped complex made of 28 subunits that are arranged in four stacked rings. The two outer rings are each formed by seven alpha subunits, and the two inner rings are formed by seven beta subunits. The proteolytic activity is exerted by three beta-subunits PSMB5, PSMB6 and PSMB7. PSMA7 interacts directly with the PSMG1-PSMG2 heterodimer which promotes 20S proteasome assembly. Interacts with HIF1A. Interacts with RAB7A. Interacts with PRKN. Interacts with ABL1 and ABL2. Interacts with EMAP2. Interacts with MAVS.

It is found in the cytoplasm. Its subcellular location is the nucleus. Functionally, component of the 20S core proteasome complex involved in the proteolytic degradation of most intracellular proteins. This complex plays numerous essential roles within the cell by associating with different regulatory particles. Associated with two 19S regulatory particles, forms the 26S proteasome and thus participates in the ATP-dependent degradation of ubiquitinated proteins. The 26S proteasome plays a key role in the maintenance of protein homeostasis by removing misfolded or damaged proteins that could impair cellular functions, and by removing proteins whose functions are no longer required. Associated with the PA200 or PA28, the 20S proteasome mediates ubiquitin-independent protein degradation. This type of proteolysis is required in several pathways including spermatogenesis (20S-PA200 complex) or generation of a subset of MHC class I-presented antigenic peptides (20S-PA28 complex). Inhibits the transactivation function of HIF-1A under both normoxic and hypoxia-mimicking conditions. The interaction with EMAP2 increases the proteasome-mediated HIF-1A degradation under the hypoxic conditions. Plays a role in hepatitis C virus internal ribosome entry site-mediated translation. Mediates nuclear translocation of the androgen receptor (AR) and thereby enhances androgen-mediated transactivation. Promotes MAVS degradation and thereby negatively regulates MAVS-mediated innate immune response. This chain is Proteasome subunit alpha type-7-like (PSMA7L), found in Macaca fascicularis (Crab-eating macaque).